Here is a 497-residue protein sequence, read N- to C-terminus: Glycerol kinase (497 aa).

T12 serves as a coordination point for ADP. Residues T12, T13, and S14 each contribute to the ATP site. A sn-glycerol 3-phosphate-binding site is contributed by T12. ADP is bound at residue R16. The sn-glycerol 3-phosphate site is built by R82, E83, Y134, and D243. Glycerol-binding residues include R82, E83, Y134, D243, and Q244. 2 residues coordinate ADP: T265 and G308. Residues T265, G308, Q312, and G411 each contribute to the ATP site. An ADP-binding site is contributed by G411.

It belongs to the FGGY kinase family.

The catalysed reaction is glycerol + ATP = sn-glycerol 3-phosphate + ADP + H(+). It participates in polyol metabolism; glycerol degradation via glycerol kinase pathway; sn-glycerol 3-phosphate from glycerol: step 1/1. Its activity is regulated as follows. Inhibited by fructose 1,6-bisphosphate (FBP). In terms of biological role, key enzyme in the regulation of glycerol uptake and metabolism. Catalyzes the phosphorylation of glycerol to yield sn-glycerol 3-phosphate. The sequence is that of Glycerol kinase from Sinorhizobium fredii (strain NBRC 101917 / NGR234).